The sequence spans 75 residues: Exodeoxyribonuclease 7 small subunit (75 aa).

The protein belongs to the XseB family. In terms of assembly, heterooligomer composed of large and small subunits.

Its subcellular location is the cytoplasm. The catalysed reaction is Exonucleolytic cleavage in either 5'- to 3'- or 3'- to 5'-direction to yield nucleoside 5'-phosphates.. Its function is as follows. Bidirectionally degrades single-stranded DNA into large acid-insoluble oligonucleotides, which are then degraded further into small acid-soluble oligonucleotides. The polypeptide is Exodeoxyribonuclease 7 small subunit (Geobacter sp. (strain M21)).